The chain runs to 696 residues: Elongation factor G (696 aa).

The region spanning 10–290 (THFRNIGIAA…AVVDYLPSPL (281 aa)) is the tr-type G domain. Residues 19 to 26 (AHIDAGKT), 89 to 93 (DTPGH), and 143 to 146 (NKMD) contribute to the GTP site.

This sequence belongs to the TRAFAC class translation factor GTPase superfamily. Classic translation factor GTPase family. EF-G/EF-2 subfamily.

The protein resides in the cytoplasm. Its function is as follows. Catalyzes the GTP-dependent ribosomal translocation step during translation elongation. During this step, the ribosome changes from the pre-translocational (PRE) to the post-translocational (POST) state as the newly formed A-site-bound peptidyl-tRNA and P-site-bound deacylated tRNA move to the P and E sites, respectively. Catalyzes the coordinated movement of the two tRNA molecules, the mRNA and conformational changes in the ribosome. The sequence is that of Elongation factor G from Deinococcus geothermalis (strain DSM 11300 / CIP 105573 / AG-3a).